Consider the following 222-residue polypeptide: Thymidylate kinase (222 aa).

An ATP-binding site is contributed by 7–14; sequence GIDGAGKS.

This sequence belongs to the thymidylate kinase family.

It catalyses the reaction dTMP + ATP = dTDP + ADP. Phosphorylation of dTMP to form dTDP in both de novo and salvage pathways of dTTP synthesis. The protein is Thymidylate kinase of Chlorobium chlorochromatii (strain CaD3).